We begin with the raw amino-acid sequence, 64 residues long: MITYYYDEKNKELHIKIYILIDQVPNKPTEEELKKVLPKILKDYANMIENGKMKLIDSKEWGIW.

This is an uncharacterized protein from Sulfolobus islandicus rod-shaped virus 1 (SIRV-1).